The primary structure comprises 251 residues: Fibroblast growth factor 23 (251 aa).

The N-terminal stretch at 1–24 is a signal peptide; that stretch reads MLGACLRLLVGALCTVCSLGTARA. Cys-95 and Cys-113 are oxidised to a cystine. Residues Thr-171 and Thr-178 are each glycosylated (O-linked (GalNAc) threonine). The disordered stretch occupies residues 175 to 251; that stretch reads RRHTRSAEDP…DRCRPFPRFV (77 aa). Residues 179–189 are compositionally biased toward basic and acidic residues; it reads RSAEDPPERDP. Ser-180 carries the post-translational modification Phosphoserine; by FAM20C.

The protein belongs to the heparin-binding growth factors family. As to quaternary structure, interacts with FGFR1, FGFR2, FGFR3 and FGFR4. Affinity between fibroblast growth factors (FGFs) and their receptors is increased by KL and heparan sulfate glycosaminoglycans that function as coreceptors. Following secretion this protein is inactivated by cleavage into a N-terminal fragment and a C-terminal fragment. The processing is effected by proprotein convertases. In terms of processing, O-glycosylated at Thr-171 and Thr-178 by GALNT3 and glycosylation of Thr-178 requires previous glycosylation at Thr171. Glycosylation is necessary for secretion; it blocks processing by proprotein convertases when the O-glycan is alpha 2,6-sialylated. Competition between proprotein convertase cleavage and block of cleavage by O-glycosylation determines the level of secreted active FGF23. Post-translationally, phosphorylation at Ser-180 mediated by FAM20C slows down glycosylation at Thr-178 notably. Expressed in the parathyroid.

The protein localises to the secreted. Regulator of phosphate homeostasis. Inhibits renal tubular phosphate transport by reducing SLC34A1 levels. Regulator of vitamin-D metabolism. Negatively regulates osteoblasts differentiation and matrix mineralization. Acts directly on the parathyroid to decrease PTH secretion. Up-regulates EGR1 expression in the presence of KL. In Rattus norvegicus (Rat), this protein is Fibroblast growth factor 23 (Fgf23).